A 221-amino-acid polypeptide reads, in one-letter code: Octanoyltransferase (221 aa).

The 189-residue stretch at 14 to 202 folds into the BPL/LPL catalytic domain; that stretch reads GVRPDTLWFL…MLGARNAPHP (189 aa). Residues 54–61, 128–130, and 141–143 contribute to the substrate site; these read RGGLLTYH, SIG, and GFA. Catalysis depends on Cys159, which acts as the Acyl-thioester intermediate. The interval 197 to 221 is disordered; that stretch reads RNAPHPPAPNLSSGDLGTGTRAGRT.

The protein belongs to the LipB family.

The protein resides in the cytoplasm. It catalyses the reaction octanoyl-[ACP] + L-lysyl-[protein] = N(6)-octanoyl-L-lysyl-[protein] + holo-[ACP] + H(+). It functions in the pathway protein modification; protein lipoylation via endogenous pathway; protein N(6)-(lipoyl)lysine from octanoyl-[acyl-carrier-protein]: step 1/2. In terms of biological role, catalyzes the transfer of endogenously produced octanoic acid from octanoyl-acyl-carrier-protein onto the lipoyl domains of lipoate-dependent enzymes. Lipoyl-ACP can also act as a substrate although octanoyl-ACP is likely to be the physiological substrate. The sequence is that of Octanoyltransferase from Frankia casuarinae (strain DSM 45818 / CECT 9043 / HFP020203 / CcI3).